A 238-amino-acid chain; its full sequence is Isoamyl acetate-hydrolyzing esterase (238 aa).

The Nucleophile role is filled by Ser-12. Asp-187 acts as the Proton donor in catalysis. His-190 (proton acceptor) is an active-site residue.

The protein belongs to the 'GDSL' lipolytic enzyme family. IAH1 subfamily. Homodimer.

It carries out the reaction 3-methylbutyl acetate + H2O = 3-methylbutanol + acetate + H(+). Plays a crucial role in the hydrolysis of isoamyl acetate in sake mash. Hydrolyzes short chain esters from acetate (C2) to hexanoate (C6), showing more specificity for shorter chain exters. No activity for decanoate (C10) esters. The polypeptide is Isoamyl acetate-hydrolyzing esterase (Saccharomyces cerevisiae (strain ATCC 204508 / S288c) (Baker's yeast)).